Here is a 589-residue protein sequence, read N- to C-terminus: Formate--tetrahydrofolate ligase (589 aa).

74–81 (TPFGEGKS) serves as a coordination point for ATP.

The protein belongs to the formate--tetrahydrofolate ligase family.

It carries out the reaction (6S)-5,6,7,8-tetrahydrofolate + formate + ATP = (6R)-10-formyltetrahydrofolate + ADP + phosphate. It functions in the pathway one-carbon metabolism; tetrahydrofolate interconversion. This chain is Formate--tetrahydrofolate ligase, found in Thermodesulfovibrio yellowstonii (strain ATCC 51303 / DSM 11347 / YP87).